Here is a 313-residue protein sequence, read N- to C-terminus: MKKRLLIIVGPTAVGKTDTSIILAKELNGEIISADSMQIYRYMDIGTAKPNEEEKKGIPHHLIDIVNPDEEFSVAEFQKIAKNHINRLIEDEKLPIVAGGTGLYINSLIYDMDFTQSISNWELRGALEAEAREKGNEYVYNKLKQIDPHAAARIHPNNLKKVIRAIEVYEETGEKIGDFSTDLNINQEYDVFFVGLTRDREELYDRINMRVDAMIEQGLIEEVKNLLSLGYDKNLIAFKGLGYKEIIGYLEGAYSLEEAMDILKRDTRRYAKRQLTWFRRYENIHWYNLSNYDSCENLAECILKDFKGHFNSL.

10 to 17 (GPTAVGKT) serves as a coordination point for ATP. 12 to 17 (TAVGKT) is a substrate binding site. An interaction with substrate tRNA region spans residues 35-38 (DSMQ).

Belongs to the IPP transferase family. In terms of assembly, monomer. The cofactor is Mg(2+).

It carries out the reaction adenosine(37) in tRNA + dimethylallyl diphosphate = N(6)-dimethylallyladenosine(37) in tRNA + diphosphate. Functionally, catalyzes the transfer of a dimethylallyl group onto the adenine at position 37 in tRNAs that read codons beginning with uridine, leading to the formation of N6-(dimethylallyl)adenosine (i(6)A). The polypeptide is tRNA dimethylallyltransferase (Alkaliphilus oremlandii (strain OhILAs) (Clostridium oremlandii (strain OhILAs))).